The primary structure comprises 287 residues: Neuferricin homolog (287 aa).

The signal sequence occupies residues 1-22 (MFGLLRHLFKFQFLFVVAAVLG). The Cytochrome b5 heme-binding domain maps to 61–146 (GTLFTPAELA…KPDDLIGLAG (86 aa)). The stretch at 175–204 (YHHKFLELLEQARDAKRQVEELRARYPGCN) forms a coiled coil.

This sequence belongs to the cytochrome b5 family. MAPR subfamily.

The protein resides in the secreted. Heme-binding protein. The polypeptide is Neuferricin homolog (Drosophila melanogaster (Fruit fly)).